We begin with the raw amino-acid sequence, 209 residues long: PRA1 family protein A2 (209 aa).

4 helical membrane passes run 51 to 72, 76 to 98, 142 to 162, and 163 to 183; these read LYYY…ALVT, ALVG…AASF, RWVF…SSCG, and LLWV…HASI.

This sequence belongs to the PRA1 family.

Its subcellular location is the endosome membrane. May be involved in both secretory and endocytic intracellular trafficking in the endosomal/prevacuolar compartments. This is PRA1 family protein A2 (PRA1A2) from Arabidopsis thaliana (Mouse-ear cress).